Here is a 490-residue protein sequence, read N- to C-terminus: MTTMPNWLKQRAFLTPERIAVSDGRRTKTFAELYEAAAVWARRLAQAGVKEGDIVALLMKNRIEMIEIIHALFFLGARVLLQNVRLTSYELGWQLDDSGARLAIADEELAGSLDGDGRVLTVGAVAALPEVDVSLKETCDLEEVATIMYTSGTTGTPKGVLQTYGNHWWSAVGSALNLGLHERDCWLAAVPLFHISGLSIAMRSVIYGMPMRLQTSFDPKEANEWIMRGDVTIMSVVAAMLQRMVAELGEARYPDTFRCMLLGGGPAPRPLLEACKEKGIPVYQTYGMTETASQIATLAPEYSLTKLGSAGKPLFPAELCILKDGKPAAPHEAGEIVVKGPNVTKGYWQRPEATAQAIRGGWFFTGDIGYLDEDGFLYVLDRRSDLIISGGENVYPAEVEAVLLSHPDVEEAGVTGVENETWGQVPYAFVRLKRGASPDEAALRAFCRERLAKYKVPARIYFVDELPRNAAQKLLRRELKRLIPKTEQTF.

Belongs to the ATP-dependent AMP-binding enzyme family. MenE subfamily.

The catalysed reaction is 2-succinylbenzoate + ATP + CoA = 2-succinylbenzoyl-CoA + AMP + diphosphate. Its pathway is quinol/quinone metabolism; 1,4-dihydroxy-2-naphthoate biosynthesis; 1,4-dihydroxy-2-naphthoate from chorismate: step 5/7. It functions in the pathway quinol/quinone metabolism; menaquinone biosynthesis. Its function is as follows. Converts 2-succinylbenzoate (OSB) to 2-succinylbenzoyl-CoA (OSB-CoA). This chain is 2-succinylbenzoate--CoA ligase, found in Geobacillus kaustophilus (strain HTA426).